Reading from the N-terminus, the 364-residue chain is GTPase Obg (364 aa).

The Obg domain maps to 1-159; that stretch reads MKFIDEARIE…RNLRLELKVL (159 aa). A disordered region spans residues 128 to 147; it reads IHFKSSTNRAPRQKTDGKAG. The OBG-type G domain occupies 160–334; it reads ADVGLLGMPN…LVHAIQEYLD (175 aa). Residues 166–173, 191–195, 213–216, 284–287, and 315–317 contribute to the GTP site; these read GMPNAGKS, FTTLH, DIPG, NKLD, and SAL. The Mg(2+) site is built by Ser173 and Thr193. Residues 340-364 are disordered; the sequence is EDAAAAAPDQRLDPTLHNVDHDDQA. Basic and acidic residues predominate over residues 349–364; the sequence is QRLDPTLHNVDHDDQA.

The protein belongs to the TRAFAC class OBG-HflX-like GTPase superfamily. OBG GTPase family. As to quaternary structure, monomer. Mg(2+) is required as a cofactor.

Its subcellular location is the cytoplasm. An essential GTPase which binds GTP, GDP and possibly (p)ppGpp with moderate affinity, with high nucleotide exchange rates and a fairly low GTP hydrolysis rate. Plays a role in control of the cell cycle, stress response, ribosome biogenesis and in those bacteria that undergo differentiation, in morphogenesis control. The protein is GTPase Obg of Ralstonia pickettii (strain 12J).